Reading from the N-terminus, the 193-residue chain is dCTP deaminase (193 aa).

DCTP is bound by residues 110-115 (RSSLAR), aspartate 128, 136-138 (VLE), tyrosine 171, lysine 178, and glutamine 182. Glutamate 138 acts as the Proton donor/acceptor in catalysis. The interval 169–193 (RPYNSRQDAKYKGQQGAVASRIDKD) is disordered.

This sequence belongs to the dCTP deaminase family. Homotrimer.

The catalysed reaction is dCTP + H2O + H(+) = dUTP + NH4(+). It functions in the pathway pyrimidine metabolism; dUMP biosynthesis; dUMP from dCTP (dUTP route): step 1/2. Functionally, catalyzes the deamination of dCTP to dUTP. This chain is dCTP deaminase, found in Erwinia tasmaniensis (strain DSM 17950 / CFBP 7177 / CIP 109463 / NCPPB 4357 / Et1/99).